Reading from the N-terminus, the 68-residue chain is Defensin gallicin (68 aa).

The first 16 residues, 1-16 (MWIESDAGVAIDRHAR), serve as a signal peptide directing secretion.

Contains 5 disulfide bonds. As to expression, expressed in hemolymph, gills, digestive gland, foot, adductor muscles and mantle.

It localises to the secreted. The protein resides in the target cell membrane. Functionally, shows antibacterial activity against numerous Gram-positive bacteria. It selectively inhibits peptidoglycan biosynthesis through complex formation with the cell wall precursor lipid II (1:1 molar ratio) thus inhibiting cell wall synthesis. The polypeptide is Defensin gallicin (Mytilus galloprovincialis (Mediterranean mussel)).